We begin with the raw amino-acid sequence, 396 residues long: Phospholipase A1-II 4 (396 aa).

Catalysis depends on Ser-221, which acts as the Acyl-ester intermediate. Catalysis depends on charge relay system residues Ser-221, Asp-282, and His-319.

Belongs to the AB hydrolase superfamily. Lipase family.

It localises to the cytoplasm. Its function is as follows. Acylhydrolase that catalyzes the hydrolysis of phospholipids at the sn-1 position. In Oryza sativa subsp. japonica (Rice), this protein is Phospholipase A1-II 4.